We begin with the raw amino-acid sequence, 232 residues long: Ubiquinone biosynthesis O-methyltransferase (232 aa).

Positions 36, 55, 76, and 120 each coordinate S-adenosyl-L-methionine.

The protein belongs to the methyltransferase superfamily. UbiG/COQ3 family.

It carries out the reaction a 3-demethylubiquinol + S-adenosyl-L-methionine = a ubiquinol + S-adenosyl-L-homocysteine + H(+). It catalyses the reaction a 3-(all-trans-polyprenyl)benzene-1,2-diol + S-adenosyl-L-methionine = a 2-methoxy-6-(all-trans-polyprenyl)phenol + S-adenosyl-L-homocysteine + H(+). Its pathway is cofactor biosynthesis; ubiquinone biosynthesis. O-methyltransferase that catalyzes the 2 O-methylation steps in the ubiquinone biosynthetic pathway. The sequence is that of Ubiquinone biosynthesis O-methyltransferase from Burkholderia lata (strain ATCC 17760 / DSM 23089 / LMG 22485 / NCIMB 9086 / R18194 / 383).